The sequence spans 521 residues: 4-cresol dehydrogenase [hydroxylating] flavoprotein subunit (521 aa).

An FAD-binding PCMH-type domain is found at 54 to 268 (AAHAPSAAVT…VEIVDALRPL (215 aa)). Tyrosine 384 is modified (O-8alpha-FAD tyrosine).

As to quaternary structure, tetramer of two cytochrome subunits and two flavoprotein subunits. The cofactor is FAD.

The enzyme catalyses 4-methylphenol + 4 oxidized [azurin] + H2O = 4 reduced [azurin] + 4-hydroxybenzaldehyde + 4 H(+). It participates in aromatic compound metabolism; p-cresol degradation. Catalyzes the azurin dependent hydroxylation of the methyl group of 4-methylphenol to form 4-hydroxybenzaldehyde. The sequence is that of 4-cresol dehydrogenase [hydroxylating] flavoprotein subunit (pchF) from Pseudomonas putida (Arthrobacter siderocapsulatus).